A 457-amino-acid polypeptide reads, in one-letter code: GTPase Era, mitochondrial (457 aa).

The transit peptide at 1-18 directs the protein to the mitochondrion; it reads MAFRVSISTFGKSLRVRR. The Era-type G domain maps to 107–350; it reads KVLRVAIIGA…RYLVVGAKPG (244 aa). Residues 115–122 are G1; it reads GAPNAGKS. 115–122 contributes to the GTP binding site; it reads GAPNAGKS. Positions 141–145 are G2; it reads HTTRA. Residues 162-165 are G3; that stretch reads DTPG. Residues 162–166 and 231–234 contribute to the GTP site; these read DTPGL and NKVD. The G4 stretch occupies residues 231 to 234; sequence NKVD. Positions 270-290 are enriched in basic and acidic residues; the sequence is AERRTDREARTSGSGDEEKPG. The disordered stretch occupies residues 270-300; the sequence is AERRTDREARTSGSGDEEKPGGDVADGEGSE. Residues 328-330 are G5; the sequence is VSA. A KH type-2 domain is found at 376–457; the sequence is LLEYLPKEVP…KLRLSVKVKN (82 aa).

The protein belongs to the TRAFAC class TrmE-Era-EngA-EngB-Septin-like GTPase superfamily. Era GTPase family.

It localises to the mitochondrion matrix. It is found in the mitochondrion inner membrane. Its function is as follows. Probable GTPase that plays a role in the mitochondrial ribosomal small subunit assembly. Specifically binds the 12S mitochondrial rRNA (12S mt-rRNA) to a 33 nucleotide section delineating the 3' terminal stem-loop region. May act as a chaperone that protects the 12S mt-rRNA on the 28S mitoribosomal subunit during ribosomal small subunit assembly. The chain is GTPase Era, mitochondrial (eral1) from Salmo salar (Atlantic salmon).